The primary structure comprises 427 residues: Probable G-protein coupled receptor 150 (427 aa).

Topologically, residues Met-1 to Asp-3 are extracellular. Residues Pro-4 to Trp-24 form a helical membrane-spanning segment. Topologically, residues Ser-25–Arg-50 are cytoplasmic. The chain crosses the membrane as a helical span at residues Ile-51–Leu-71. Residues Cys-72 to Lys-89 are Extracellular-facing. Residues Met-90 to Leu-110 traverse the membrane as a helical segment. The Cytoplasmic segment spans residues Ser-111–Arg-170. The chain crosses the membrane as a helical span at residues Ala-171–Val-191. The Extracellular portion of the chain corresponds to Arg-192–Ala-230. Residues Ile-231–Val-251 traverse the membrane as a helical segment. The Cytoplasmic portion of the chain corresponds to Trp-252–Ser-286. The helical transmembrane segment at Leu-287–Ala-307 threads the bilayer. Residues Arg-308–Val-327 are Extracellular-facing. Residues Ala-328–Phe-348 traverse the membrane as a helical segment. The Cytoplasmic portion of the chain corresponds to Gln-349–Phe-427. A disordered region spans residues Glu-402–Phe-427. A compositionally biased stretch (pro residues) spans Arg-410 to Cys-421.

It belongs to the G-protein coupled receptor 1 family.

It localises to the cell membrane. Functionally, orphan receptor. This is Probable G-protein coupled receptor 150 (Gpr150) from Mus musculus (Mouse).